The sequence spans 300 residues: Ribonuclease HIII (300 aa).

In terms of domain architecture, RNase H type-2 spans 86-300 (RPRLGVDESG…FNEICDSASA (215 aa)). Residues Asp-92, Glu-93, and Asp-196 each coordinate a divalent metal cation.

Belongs to the RNase HII family. RnhC subfamily. Requires Mn(2+) as cofactor. Mg(2+) serves as cofactor.

Its subcellular location is the cytoplasm. It carries out the reaction Endonucleolytic cleavage to 5'-phosphomonoester.. Endonuclease that specifically degrades the RNA of RNA-DNA hybrids. The sequence is that of Ribonuclease HIII from Chlamydia caviae (strain ATCC VR-813 / DSM 19441 / 03DC25 / GPIC) (Chlamydophila caviae).